Consider the following 57-residue polypeptide: Small ribosomal subunit protein bS21 (57 aa).

Residues 35 to 57 (REFYEKPSVRRKKKSEAARKRKY) form a disordered region. A compositionally biased stretch (basic residues) spans 43 to 57 (VRRKKKSEAARKRKY).

Belongs to the bacterial ribosomal protein bS21 family.

The protein is Small ribosomal subunit protein bS21 of Bacillus licheniformis (strain ATCC 14580 / DSM 13 / JCM 2505 / CCUG 7422 / NBRC 12200 / NCIMB 9375 / NCTC 10341 / NRRL NRS-1264 / Gibson 46).